The sequence spans 425 residues: UDP-N-acetylglucosamine 1-carboxyvinyltransferase (425 aa).

25 to 26 (KN) is a phosphoenolpyruvate binding site. Arginine 95 provides a ligand contact to UDP-N-acetyl-alpha-D-glucosamine. Cysteine 119 (proton donor) is an active-site residue. At cysteine 119 the chain carries 2-(S-cysteinyl)pyruvic acid O-phosphothioketal. UDP-N-acetyl-alpha-D-glucosamine-binding positions include 124–128 (RPVDQ), aspartate 306, and isoleucine 328.

It belongs to the EPSP synthase family. MurA subfamily.

It is found in the cytoplasm. The catalysed reaction is phosphoenolpyruvate + UDP-N-acetyl-alpha-D-glucosamine = UDP-N-acetyl-3-O-(1-carboxyvinyl)-alpha-D-glucosamine + phosphate. It functions in the pathway cell wall biogenesis; peptidoglycan biosynthesis. Functionally, cell wall formation. Adds enolpyruvyl to UDP-N-acetylglucosamine. The polypeptide is UDP-N-acetylglucosamine 1-carboxyvinyltransferase (Thermus thermophilus (strain ATCC BAA-163 / DSM 7039 / HB27)).